A 660-amino-acid polypeptide reads, in one-letter code: Bifunctional polymyxin resistance protein ArnA (660 aa).

Positions 1 to 304 are formyltransferase ArnAFT; the sequence is MKTVVFAYHD…TLGLVQGSRL (304 aa). 86 to 88 lines the (6R)-10-formyltetrahydrofolate pocket; sequence HLI. The active-site Proton donor; for formyltransferase activity is histidine 104. Residues arginine 114 and 136–140 each bind (6R)-10-formyltetrahydrofolate; that span reads VKRAD. Residues 314–660 are dehydrogenase ArnADH; it reads RRTRVLILGV…RTVDLTDKPS (347 aa). NAD(+)-binding positions include aspartate 347 and 368 to 369; that span reads DI. UDP-alpha-D-glucuronate contacts are provided by residues alanine 393, tyrosine 398, and 432-433; that span reads TS. The active-site Proton acceptor; for decarboxylase activity is the glutamate 434. Residues arginine 460, asparagine 492, 526–535, and tyrosine 613 each bind UDP-alpha-D-glucuronate; that span reads KLIDGGKQKR. Arginine 619 serves as the catalytic Proton donor; for decarboxylase activity.

This sequence in the N-terminal section; belongs to the Fmt family. UDP-L-Ara4N formyltransferase subfamily. In the C-terminal section; belongs to the NAD(P)-dependent epimerase/dehydratase family. UDP-glucuronic acid decarboxylase subfamily. As to quaternary structure, homohexamer, formed by a dimer of trimers.

It catalyses the reaction UDP-alpha-D-glucuronate + NAD(+) = UDP-beta-L-threo-pentopyranos-4-ulose + CO2 + NADH. The catalysed reaction is UDP-4-amino-4-deoxy-beta-L-arabinose + (6R)-10-formyltetrahydrofolate = UDP-4-deoxy-4-formamido-beta-L-arabinose + (6S)-5,6,7,8-tetrahydrofolate + H(+). The protein operates within nucleotide-sugar biosynthesis; UDP-4-deoxy-4-formamido-beta-L-arabinose biosynthesis; UDP-4-deoxy-4-formamido-beta-L-arabinose from UDP-alpha-D-glucuronate: step 1/3. Its pathway is nucleotide-sugar biosynthesis; UDP-4-deoxy-4-formamido-beta-L-arabinose biosynthesis; UDP-4-deoxy-4-formamido-beta-L-arabinose from UDP-alpha-D-glucuronate: step 3/3. It functions in the pathway bacterial outer membrane biogenesis; lipopolysaccharide biosynthesis. In terms of biological role, bifunctional enzyme that catalyzes the oxidative decarboxylation of UDP-glucuronic acid (UDP-GlcUA) to UDP-4-keto-arabinose (UDP-Ara4O) and the addition of a formyl group to UDP-4-amino-4-deoxy-L-arabinose (UDP-L-Ara4N) to form UDP-L-4-formamido-arabinose (UDP-L-Ara4FN). The modified arabinose is attached to lipid A and is required for resistance to polymyxin and cationic antimicrobial peptides. The sequence is that of Bifunctional polymyxin resistance protein ArnA from Escherichia coli O157:H7.